Here is a 396-residue protein sequence, read N- to C-terminus: L-lactate dehydrogenase (396 aa).

One can recognise an FMN hydroxy acid dehydrogenase domain in the interval 1-380 (MIISAASDYR…TQDSLVQGLG (380 aa)). Residue Tyr-24 coordinates substrate. Residues Ser-106 and Gln-127 each contribute to the FMN site. A substrate-binding site is contributed by Tyr-129. Thr-155 contributes to the FMN binding site. Position 164 (Arg-164) interacts with substrate. Lys-251 is a binding site for FMN. His-275 functions as the Proton acceptor in the catalytic mechanism. Position 278 (Arg-278) interacts with substrate. 306–330 (DSGIRNGLDVVRMIALGADTVLLGR) is a binding site for FMN.

This sequence belongs to the FMN-dependent alpha-hydroxy acid dehydrogenase family. The cofactor is FMN.

The protein localises to the cell inner membrane. It catalyses the reaction (S)-lactate + A = pyruvate + AH2. In terms of biological role, catalyzes the conversion of L-lactate to pyruvate. Is coupled to the respiratory chain. The polypeptide is L-lactate dehydrogenase (Shigella boydii serotype 4 (strain Sb227)).